Reading from the N-terminus, the 322-residue chain is tRNA pseudouridine synthase B (322 aa).

The span at 1–11 (MRPPRTTELDR) shows a compositional bias: basic and acidic residues. Residues 1–22 (MRPPRTTELDRPMTTAASQRPR) are disordered. Aspartate 65 (nucleophile) is an active-site residue.

Belongs to the pseudouridine synthase TruB family. Type 1 subfamily.

The catalysed reaction is uridine(55) in tRNA = pseudouridine(55) in tRNA. Functionally, responsible for synthesis of pseudouridine from uracil-55 in the psi GC loop of transfer RNAs. The polypeptide is tRNA pseudouridine synthase B (Burkholderia lata (strain ATCC 17760 / DSM 23089 / LMG 22485 / NCIMB 9086 / R18194 / 383)).